Here is a 454-residue protein sequence, read N- to C-terminus: Metalloprotease MTH_856 (454 aa).

Residues 92–115 (QVGSGAPSVDKTMVRSSRPPSDVP) form a disordered region.

It belongs to the peptidase U62 family.

In terms of biological role, probable metalloprotease. This Methanothermobacter thermautotrophicus (strain ATCC 29096 / DSM 1053 / JCM 10044 / NBRC 100330 / Delta H) (Methanobacterium thermoautotrophicum) protein is Metalloprotease MTH_856.